A 640-amino-acid chain; its full sequence is Threonine--tRNA ligase (640 aa).

One can recognise a TGS domain in the interval M1 to T61. A catalytic region spans residues D242–P533. Zn(2+) is bound by residues C333, H384, and H510.

It belongs to the class-II aminoacyl-tRNA synthetase family. In terms of assembly, homodimer. It depends on Zn(2+) as a cofactor.

The protein resides in the cytoplasm. The enzyme catalyses tRNA(Thr) + L-threonine + ATP = L-threonyl-tRNA(Thr) + AMP + diphosphate + H(+). Its function is as follows. Catalyzes the attachment of threonine to tRNA(Thr) in a two-step reaction: L-threonine is first activated by ATP to form Thr-AMP and then transferred to the acceptor end of tRNA(Thr). Also edits incorrectly charged L-seryl-tRNA(Thr). The chain is Threonine--tRNA ligase from Polynucleobacter necessarius subsp. necessarius (strain STIR1).